Here is a 302-residue protein sequence, read N- to C-terminus: Negative regulator of the PHO system (302 aa).

In terms of domain architecture, Protein kinase spans 6–296 (FKQLEKLGNG…AKQALLHPWF (291 aa)). Residues 12-20 (LGNGTYATV) and Lys-35 contribute to the ATP site. The active-site Proton acceptor is Asp-132.

Belongs to the protein kinase superfamily. CMGC Ser/Thr protein kinase family. CDC2/CDKX subfamily. As to quaternary structure, interacts with a number of cyclins.

The catalysed reaction is L-seryl-[protein] + ATP = O-phospho-L-seryl-[protein] + ADP + H(+). It carries out the reaction L-threonyl-[protein] + ATP = O-phospho-L-threonyl-[protein] + ADP + H(+). Functionally, when phosphate concentrations are high it phosphorylates the PHO4 transcription factor thus establishing repression. The protein is Negative regulator of the PHO system (PHO85) of Candida glabrata (strain ATCC 2001 / BCRC 20586 / JCM 3761 / NBRC 0622 / NRRL Y-65 / CBS 138) (Yeast).